We begin with the raw amino-acid sequence, 1742 residues long: Kinase non-catalytic C-lobe domain-containing protein 1 (1742 aa).

Residues 37-217 (VSLADILSLR…QELSENTWRG (181 aa)) form the KIND 1 domain. 2 disordered regions span residues 215–288 (WRGR…EGLA) and 365–455 (FKTQ…TEQS). At serine 267 the chain carries Phosphoserine. A compositionally biased stretch (polar residues) spans 403–412 (LEASSPSQGS). A compositionally biased stretch (basic and acidic residues) spans 426–445 (DSDHEGHIPRSEEKIPEESR). In terms of domain architecture, KIND 2 spans 456-620 (LSLKDLLSKL…RASTCKVHPE (165 aa)). Disordered stretches follow at residues 703 to 727 (DQLALPSESNEKPKEGSGHLDREGT), 744 to 876 (SNQL…KMTA), 948 to 1006 (GPAS…LSDI), and 1028 to 1076 (VTRE…ASDF). Residues 711-727 (SNEKPKEGSGHLDREGT) are compositionally biased toward basic and acidic residues. Residues 755–771 (GATPDPDGDSGSPSSAT) are compositionally biased toward low complexity. Residues 782–791 (VTQQKGTSGT) show a composition bias toward polar residues. Residues 847 to 861 (SDGHPEKPRPADRKL) are compositionally biased toward basic and acidic residues. Low complexity predominate over residues 949-965 (PASPSESTSEEPGSQPE). Serine 951 carries the post-translational modification Phosphoserine. Residues 1043-1053 (GPSQDSTSHAS) are compositionally biased toward polar residues. Residues 1112–1177 (HTELEAQSPE…EMKSKVQFLS (66 aa)) adopt a coiled-coil conformation. Residues 1239 to 1367 (KARILQAGTP…ALLEVGTERR (129 aa)) form the N-terminal Ras-GEF domain. The Ras-GEF domain occupies 1461-1712 (STNQLFTQLT…SGADVSILAA (252 aa)).

As to quaternary structure, interacts (via KIND2) with MAP2; the interaction enhances MAP2 phosphorylation and localizes KNDC1 to dendrites. In terms of tissue distribution, highly expressed in the brain and at low levels in the ovary. In the brain it is most prominently expressed in the cerebellum where it is restricted to the granular Purkinje cell layer.

It is found in the cell projection. The protein localises to the dendrite. It localises to the perikaryon. In terms of biological role, RAS-Guanine nucleotide exchange factor (GEF) that controls the negative regulation of neuronal dendrite growth by mediating a signaling pathway linking RAS and MAP2. May be involved in cellular senescence. In Mus musculus (Mouse), this protein is Kinase non-catalytic C-lobe domain-containing protein 1.